Consider the following 312-residue polypeptide: Methionyl-tRNA formyltransferase (312 aa).

Residue 117–120 (SLLP) coordinates (6S)-5,6,7,8-tetrahydrofolate.

Belongs to the Fmt family.

The enzyme catalyses L-methionyl-tRNA(fMet) + (6R)-10-formyltetrahydrofolate = N-formyl-L-methionyl-tRNA(fMet) + (6S)-5,6,7,8-tetrahydrofolate + H(+). Attaches a formyl group to the free amino group of methionyl-tRNA(fMet). The formyl group appears to play a dual role in the initiator identity of N-formylmethionyl-tRNA by promoting its recognition by IF2 and preventing the misappropriation of this tRNA by the elongation apparatus. This chain is Methionyl-tRNA formyltransferase, found in Bordetella parapertussis (strain 12822 / ATCC BAA-587 / NCTC 13253).